The chain runs to 92 residues: MKTLVLLSALVLLAFQVQADPIQNTDEETKTEEQPGEEDQAVSISFGGQEGSALHEKSLRGLLCYCRKGHCKRGERVRGTCGIRFLYCCPRR.

Residues 1-19 form the signal peptide; that stretch reads MKTLVLLSALVLLAFQVQA. A propeptide spanning residues 20 to 58 is cleaved from the precursor; the sequence is DPIQNTDEETKTEEQPGEEDQAVSISFGGQEGSALHEKS. The segment at 23–42 is disordered; the sequence is QNTDEETKTEEQPGEEDQAV. Disulfide bonds link C64-C89, C66-C81, and C71-C88.

Belongs to the alpha-defensin family. In terms of tissue distribution, paneth cells of the small bowel.

Its subcellular location is the secreted. The protein resides in the cytoplasmic vesicle. It is found in the secretory vesicle. Host-defense peptide that has antimicrobial activity. Exhibits activity against Gram-negative E.coli (in vitro). Probably contributes to the antimicrobial barrier function of the small bowel mucosa. This is Defensin alpha 4 from Mus musculus (Mouse).